Here is a 153-residue protein sequence, read N- to C-terminus: UPF0756 membrane protein BA_4840/GBAA_4840/BAS4489 (153 aa).

The next 4 helical transmembrane spans lie at F8–I28, L54–F74, W87–L107, and L117–I137.

Belongs to the UPF0756 family.

The protein localises to the cell membrane. The protein is UPF0756 membrane protein BA_4840/GBAA_4840/BAS4489 of Bacillus anthracis.